The sequence spans 116 residues: Probable non-functional immunoglobulin kappa variable 3-7 (116 aa).

The signal sequence occupies residues 1-21 (MEAPAQLLFLLLLWLPDTTRE). The segment at 21–43 (EIVMTQSPPTLSLSPGERVTLSC) is framework-1. The 95-residue stretch at 22–116 (IVMTQSPPTL…YYCQQDYNLP (95 aa)) folds into the Ig-like domain. A disulfide bridge links cysteine 43 with cysteine 109. A complementarity-determining-1 region spans residues 44 to 55 (RASQSVSSSYLT). Residues 56–70 (WYQQKPGQAPRLLIY) form a framework-2 region. The complementarity-determining-2 stretch occupies residues 71–77 (GASTRAT). The segment at 78–109 (SIPARFSGSGSGTDFTLTISSLQPEDFAVYYC) is framework-3. The complementarity-determining-3 stretch occupies residues 110–116 (QQDYNLP).

Immunoglobulins are composed of two identical heavy chains and two identical light chains; disulfide-linked.

It is found in the secreted. The protein localises to the cell membrane. In terms of biological role, probable non-functional open reading frame (ORF) of V region of the variable domain of immunoglobulin light chains. Non-functional ORF generally cannot participate in the synthesis of a productive immunoglobulin chain due to altered V-(D)-J or switch recombination and/or splicing site (at mRNA level) and/or conserved amino acid change (protein level). Immunoglobulins, also known as antibodies, are membrane-bound or secreted glycoproteins produced by B lymphocytes. In the recognition phase of humoral immunity, the membrane-bound immunoglobulins serve as receptors which, upon binding of a specific antigen, trigger the clonal expansion and differentiation of B lymphocytes into immunoglobulins-secreting plasma cells. Secreted immunoglobulins mediate the effector phase of humoral immunity, which results in the elimination of bound antigens. The antigen binding site is formed by the variable domain of one heavy chain, together with that of its associated light chain. Thus, each immunoglobulin has two antigen binding sites with remarkable affinity for a particular antigen. The variable domains are assembled by a process called V-(D)-J rearrangement and can then be subjected to somatic hypermutations which, after exposure to antigen and selection, allow affinity maturation for a particular antigen. The chain is Probable non-functional immunoglobulin kappa variable 3-7 from Homo sapiens (Human).